The primary structure comprises 127 residues: Small ribosomal subunit protein uS11 (127 aa).

Belongs to the universal ribosomal protein uS11 family. In terms of assembly, part of the 30S ribosomal subunit. Interacts with proteins S7 and S18. Binds to IF-3.

Located on the platform of the 30S subunit, it bridges several disparate RNA helices of the 16S rRNA. Forms part of the Shine-Dalgarno cleft in the 70S ribosome. This chain is Small ribosomal subunit protein uS11, found in Chlorobaculum tepidum (strain ATCC 49652 / DSM 12025 / NBRC 103806 / TLS) (Chlorobium tepidum).